Reading from the N-terminus, the 464-residue chain is Argininosuccinate lyase (464 aa).

This sequence belongs to the lyase 1 family. Argininosuccinate lyase subfamily.

It is found in the cytoplasm. The enzyme catalyses 2-(N(omega)-L-arginino)succinate = fumarate + L-arginine. It functions in the pathway amino-acid biosynthesis; L-arginine biosynthesis; L-arginine from L-ornithine and carbamoyl phosphate: step 3/3. This is Argininosuccinate lyase from Desulfotalea psychrophila (strain LSv54 / DSM 12343).